The primary structure comprises 177 residues: Large ribosomal subunit protein uL6 (177 aa).

It belongs to the universal ribosomal protein uL6 family. Part of the 50S ribosomal subunit.

Its function is as follows. This protein binds to the 23S rRNA, and is important in its secondary structure. It is located near the subunit interface in the base of the L7/L12 stalk, and near the tRNA binding site of the peptidyltransferase center. The polypeptide is Large ribosomal subunit protein uL6 (Dichelobacter nodosus (strain VCS1703A)).